Consider the following 268-residue polypeptide: Interleukin-1 alpha (268 aa).

Positions Met-1–Arg-112 are excised as a propeptide. Position 82 is an N6-acetyllysine (Lys-82). A nuclear localization signal (NLS) region spans residues Lys-82–Leu-86. A Phosphoserine modification is found at Ser-87. N-linked (GlcNAc...) asparagine glycans are attached at residues Asn-102 and Asn-141.

It belongs to the IL-1 family. Monomer. Interacts with TMED10; the interaction mediates the translocation from the cytoplasm into the ERGIC (endoplasmic reticulum-Golgi intermediate compartment) and thereby secretion. Interacts with IL1R1. Interacts with S100A13; this interaction is the first step in the export of IL1A, followed by direct translocation of this complex across the plasma membrane. In terms of processing, acetylated within its nuclear localization sequence, which impacts subcellular localization. Post-translationally, proteolytic processed by CAPN1 in a calcium-dependent manner. Cleavage from 31 kDa precursor to 18 kDa biologically active molecules. Phosphorylated. Phosphorylation greatly enhances susceptibility to digestion and promotes the conversion of pre-IL1A alpha to the biologically active IL1A.

It is found in the nucleus. Its subcellular location is the cytoplasm. The protein resides in the secreted. In terms of biological role, cytokine constitutively present intracellularly in nearly all resting non-hematopoietic cells that plays an important role in inflammation and bridges the innate and adaptive immune systems. After binding to its receptor IL1R1 together with its accessory protein IL1RAP, forms the high affinity interleukin-1 receptor complex. Signaling involves the recruitment of adapter molecules such as MYD88, IRAK1 or IRAK4. In turn, mediates the activation of NF-kappa-B and the three MAPK pathways p38, p42/p44 and JNK pathways. Within the cell, acts as an alarmin and cell death results in its liberation in the extracellular space after disruption of the cell membrane to induce inflammation and alert the host to injury or damage. In addition to its role as a danger signal, which occurs when the cytokine is passively released by cell necrosis, directly senses DNA damage and acts as signal for genotoxic stress without loss of cell integrity. The polypeptide is Interleukin-1 alpha (IL1A) (Bos taurus (Bovine)).